The sequence spans 355 residues: Thiamine thiazole synthase, chloroplastic (355 aa).

The transit peptide at 1–42 (MAAMATTASSLLKTSFAGARLPAAARNPTVSVAPRTGGAICN) directs the protein to the chloroplast. Substrate contacts are provided by residues Ala-96, 116 to 117 (EQ), Gly-124, and Val-189. At Cys-218 the chain carries 2,3-didehydroalanine (Cys). Substrate is bound by residues Asp-220, His-235, Met-287, and 297 to 299 (RMG).

This sequence belongs to the THI4 family. Homooctamer. Fe cation is required as a cofactor. During the catalytic reaction, a sulfide is transferred from Cys-218 to a reaction intermediate, generating a dehydroalanine residue.

The protein resides in the plastid. It localises to the chloroplast. The enzyme catalyses [ADP-thiazole synthase]-L-cysteine + glycine + NAD(+) = [ADP-thiazole synthase]-dehydroalanine + ADP-5-ethyl-4-methylthiazole-2-carboxylate + nicotinamide + 3 H2O + 2 H(+). Involved in biosynthesis of the thiamine precursor thiazole. Catalyzes the conversion of NAD and glycine to adenosine diphosphate 5-(2-hydroxyethyl)-4-methylthiazole-2-carboxylic acid (ADT), an adenylated thiazole intermediate. The reaction includes an iron-dependent sulfide transfer from a conserved cysteine residue of the protein to a thiazole intermediate. The enzyme can only undergo a single turnover, which suggests it is a suicide enzyme. May have additional roles in adaptation to various stress conditions and in DNA damage tolerance. Required fot thiamine accumulation and disease resistance toward the bacterial pathogen Xanthomonas oryzae pv oryzae (Xoo) and the fungal pathogen Magnaporthe oryzae. During infection by Xoo, functions positively in the defense pathway initiated by the resistance genes XA3 and XA26 by promoting thiamine synthesis. May function upstream of the defense-related proteins peroxidases, phenylalanine ammonia-lyases and pathogenesis-related proteins. In terms of biological role, (Microbial infection) During infection by Xanthomonas oryzae pv oryzae (Xoo), THI1 interacts with the type III effector virulence factor xadA from Xoo, which is an adhesin-like outer membrane protein. This probably attenuates the function of THI1 in defense response. In Oryza sativa subsp. japonica (Rice), this protein is Thiamine thiazole synthase, chloroplastic.